A 660-amino-acid polypeptide reads, in one-letter code: Tripartite terminase subunit 3 (660 aa).

A Walker A motif motif is present at residues 203 to 210 (VPRRHGKT). The short motif at 294–299 (ILLVDE) is the Walker B motif element. The For ATPase activity role is filled by Glu-299. Active-site for nuclease activity residues include Asp-452, Glu-523, and Asp-637.

The protein belongs to the herpesviridae TRM3 protein family. As to quaternary structure, interacts with the terminase subunits TRM1 and TRM2. Interacts with portal protein.

The protein resides in the host nucleus. Functionally, component of the molecular motor that translocates viral genomic DNA in empty capsid during DNA packaging. Forms a tripartite terminase complex together with TRM1 and TRM2 in the host cytoplasm. Once the complex reaches the host nucleus, it interacts with the capsid portal vertex. This portal forms a ring in which genomic DNA is translocated into the capsid. TRM3 carries an RNase H-like nuclease activity that plays an important role for the cleavage of concatemeric viral DNA into unit length genomes. In Elephas maximus (Indian elephant), this protein is Tripartite terminase subunit 3.